A 159-amino-acid polypeptide reads, in one-letter code: Phosphopantetheine adenylyltransferase (159 aa).

Residue Ser-8 coordinates substrate. Residues 8-9 (SF) and His-16 contribute to the ATP site. Residues Lys-40, Thr-72, and Arg-86 each contribute to the substrate site. Residues 87 to 89 (GLR), Glu-97, and 122 to 128 (YSFLSSS) each bind ATP.

Belongs to the bacterial CoaD family. As to quaternary structure, homohexamer. It depends on Mg(2+) as a cofactor.

The protein localises to the cytoplasm. The catalysed reaction is (R)-4'-phosphopantetheine + ATP + H(+) = 3'-dephospho-CoA + diphosphate. It participates in cofactor biosynthesis; coenzyme A biosynthesis; CoA from (R)-pantothenate: step 4/5. Its function is as follows. Reversibly transfers an adenylyl group from ATP to 4'-phosphopantetheine, yielding dephospho-CoA (dPCoA) and pyrophosphate. This is Phosphopantetheine adenylyltransferase from Synechocystis sp. (strain ATCC 27184 / PCC 6803 / Kazusa).